Reading from the N-terminus, the 604-residue chain is uncharacterized protein (604 aa).

A signal peptide spans 1–19; that stretch reads MIVRILLLFIALFTFGVQA.

This sequence to H.influenzae HbpA.

This is an uncharacterized protein from Escherichia coli (strain K12).